Reading from the N-terminus, the 88-residue chain is Small ribosomal subunit protein uS17 (88 aa).

It belongs to the universal ribosomal protein uS17 family. In terms of assembly, part of the 30S ribosomal subunit.

Its function is as follows. One of the primary rRNA binding proteins, it binds specifically to the 5'-end of 16S ribosomal RNA. The polypeptide is Small ribosomal subunit protein uS17 (Prochlorococcus marinus (strain MIT 9303)).